A 522-amino-acid polypeptide reads, in one-letter code: 2-isopropylmalate synthase (522 aa).

Residues V5 to H267 form the Pyruvate carboxyltransferase domain. Positions 14, 202, 204, and 238 each coordinate Mn(2+). The segment at Q392–V522 is regulatory domain.

This sequence belongs to the alpha-IPM synthase/homocitrate synthase family. LeuA type 1 subfamily. Homodimer. Mn(2+) serves as cofactor.

It is found in the cytoplasm. It carries out the reaction 3-methyl-2-oxobutanoate + acetyl-CoA + H2O = (2S)-2-isopropylmalate + CoA + H(+). It functions in the pathway amino-acid biosynthesis; L-leucine biosynthesis; L-leucine from 3-methyl-2-oxobutanoate: step 1/4. Functionally, catalyzes the condensation of the acetyl group of acetyl-CoA with 3-methyl-2-oxobutanoate (2-ketoisovalerate) to form 3-carboxy-3-hydroxy-4-methylpentanoate (2-isopropylmalate). In Shewanella putrefaciens (strain CN-32 / ATCC BAA-453), this protein is 2-isopropylmalate synthase.